Consider the following 540-residue polypeptide: 2-isopropylmalate synthase (540 aa).

Positions 8-271 (VLIFDTTLRD…NPFFGRESDS (264 aa)) constitute a Pyruvate carboxyltransferase domain. Residues Asp17, His208, His210, and Asn244 each contribute to the Mn(2+) site. Residues 408–540 (QLRLVQVSCG…AVLADRRPGI (133 aa)) are regulatory domain.

The protein belongs to the alpha-IPM synthase/homocitrate synthase family. LeuA type 1 subfamily. In terms of assembly, homodimer. Mn(2+) is required as a cofactor.

The protein resides in the cytoplasm. It carries out the reaction 3-methyl-2-oxobutanoate + acetyl-CoA + H2O = (2S)-2-isopropylmalate + CoA + H(+). The protein operates within amino-acid biosynthesis; L-leucine biosynthesis; L-leucine from 3-methyl-2-oxobutanoate: step 1/4. Functionally, catalyzes the condensation of the acetyl group of acetyl-CoA with 3-methyl-2-oxobutanoate (2-ketoisovalerate) to form 3-carboxy-3-hydroxy-4-methylpentanoate (2-isopropylmalate). In Prochlorococcus marinus (strain MIT 9303), this protein is 2-isopropylmalate synthase.